The chain runs to 502 residues: uncharacterized protein (502 aa).

2 helical membrane-spanning segments follow: residues 10–30 (NLTLNLTIIFLIFCNISIXIF) and 473–493 (FSLIIVNLIILPTIILIFGLV).

The protein localises to the cell membrane. This is an uncharacterized protein from Borreliella burgdorferi (strain ATCC 35210 / DSM 4680 / CIP 102532 / B31) (Borrelia burgdorferi).